A 206-amino-acid chain; its full sequence is Octanoyltransferase (206 aa).

In terms of domain architecture, BPL/LPL catalytic spans 30-206; that stretch reads PETNDEIWLV…EFVTLLNNSI (177 aa). Substrate-binding positions include 69–76, 137–139, and 150–152; these read RGGQVTYH, SLG, and GIA. Cys168 (acyl-thioester intermediate) is an active-site residue.

It belongs to the LipB family.

It is found in the cytoplasm. The enzyme catalyses octanoyl-[ACP] + L-lysyl-[protein] = N(6)-octanoyl-L-lysyl-[protein] + holo-[ACP] + H(+). The protein operates within protein modification; protein lipoylation via endogenous pathway; protein N(6)-(lipoyl)lysine from octanoyl-[acyl-carrier-protein]: step 1/2. Catalyzes the transfer of endogenously produced octanoic acid from octanoyl-acyl-carrier-protein onto the lipoyl domains of lipoate-dependent enzymes. Lipoyl-ACP can also act as a substrate although octanoyl-ACP is likely to be the physiological substrate. This Francisella tularensis subsp. holarctica (strain FTNF002-00 / FTA) protein is Octanoyltransferase.